The sequence spans 300 residues: Fe(3+) dicitrate-binding periplasmic protein FecB (300 aa).

The first 21 residues, 1–21, serve as a signal peptide directing secretion; it reads MLAFIRFLFAGLLLVISHAFA. Residues 39 to 295 enclose the Fe/B12 periplasmic-binding domain; the sequence is RIVVLELSFA…DTVKIFHHQP (257 aa).

The protein belongs to the bacterial solute-binding protein 8 family. The complex is composed of two ATP-binding proteins (FecE), two transmembrane proteins (FecC and FecD) and a solute-binding protein (FecB). Interacts with FecC and FecD.

It localises to the periplasm. Part of the ABC transporter complex FecBCDE involved in citrate-dependent Fe(3+) uptake. Binds both iron-free and iron-loaded citrate although it binds iron-loaded citrate with a higher affinity. Binds different forms of Fe(3+)-citrate as well as citrate complexed with various representative Fe(3+)-mimics (Ga(3+), Al(3+), Sc(3+) and In(3+)) and a representative divalent metal ion (Mg(2+)). Can also bind various tricarboxylates in iron-free and iron-loaded form. This is Fe(3+) dicitrate-binding periplasmic protein FecB from Escherichia coli (strain K12).